The sequence spans 290 residues: Undecaprenyl-diphosphatase (290 aa).

8 helical membrane passes run 5–25 (IGIF…YFPI), 44–64 (GTAY…TYFY), 88–108 (VRLF…GLAL), 122–142 (LSVI…SESL), 152–172 (IRVI…VPGV), 195–215 (FSFL…LKVL), 226–246 (PIVA…AWLL), and 255–275 (LVFV…LAAG).

It belongs to the UppP family.

It localises to the cell inner membrane. The enzyme catalyses di-trans,octa-cis-undecaprenyl diphosphate + H2O = di-trans,octa-cis-undecaprenyl phosphate + phosphate + H(+). Functionally, catalyzes the dephosphorylation of undecaprenyl diphosphate (UPP). Confers resistance to bacitracin. The polypeptide is Undecaprenyl-diphosphatase (Gloeobacter violaceus (strain ATCC 29082 / PCC 7421)).